A 248-amino-acid polypeptide reads, in one-letter code: DNA repair protein RecO (248 aa).

Belongs to the RecO family.

Involved in DNA repair and RecF pathway recombination. The chain is DNA repair protein RecO from Streptomyces griseus subsp. griseus (strain JCM 4626 / CBS 651.72 / NBRC 13350 / KCC S-0626 / ISP 5235).